A 335-amino-acid chain; its full sequence is Serpentine receptor class XA 10 (335 aa).

Residues 1–10 are Extracellular-facing; the sequence is MDVDAAVVKR. A helical transmembrane segment spans residues 11 to 31; sequence IALWVYETCSVFNLFYCITLS. Residues 32-46 lie on the Cytoplasmic side of the membrane; sequence LAIKTSKNNALPATY. A helical transmembrane segment spans residues 47 to 67; that stretch reads IYNMAISNALLVIFGIMVYIL. The Extracellular segment spans residues 68–82; sequence PYYMSDKTYKTYRDS. Residues 83 to 103 traverse the membrane as a helical segment; sequence IGAMISVGVTFNYLHPMLTLI. At 104–126 the chain is on the cytoplasmic side; that stretch reads LMTINRIAVVVSMQASQLFTSSK. A helical membrane pass occupies residues 127–147; sequence IWLYTSFHMTANFACLIIPYL. At 148-177 the chain is on the extracellular side; it reads SECRINYDIRKVGFISECAPDRHQITTFSN. The helical transmembrane segment at 178 to 198 threads the bilayer; sequence YYSVFFPFVAFFFNVLVIINF. Residues 199-238 are Cytoplasmic-facing; it reads KLQRSPTYTKIKNMFRRGNGDQFTSMPSDVLKAKKKTERM. The chain crosses the membrane as a helical span at residues 239 to 259; it reads LMIQAFITAFYLSVYELTSLV. Over 260-276 the chain is Extracellular; that stretch reads LRVVPELFGNLSLDGKL. A helical transmembrane segment spans residues 277–297; it reads AFTYFRLAQVPCHVFLVYFIF. Over 298–319 the chain is Cytoplasmic; the sequence is TPVTRKIYMDFVRERVFCMKPA.

Belongs to the nematode receptor-like protein srxa family.

It localises to the membrane. This is Serpentine receptor class XA 10 (srxa-10) from Caenorhabditis elegans.